The sequence spans 251 residues: Gamma-gliadin (251 aa).

The signal sequence occupies residues 1 to 19 (MKTLLILTILAMAITIGTA). Residues 26 to 143 (SSQVQWPQQQ…QQSFPQQQPP (118 aa)) form a disordered region. The span at 42-81 (QPFSQQPQQTFPQPQQTFPHQPQQQFPQPQQPQQQFLQPQ) shows a compositional bias: low complexity. A compositionally biased stretch (pro residues) spans 82–99 (QPFPQQPQQPYPQQPQQP). Positions 100–139 (FPQTQQPQQLFPQSQQPQQQFSQPQQQFPQPQQPQQSFPQ) are enriched in low complexity.

Belongs to the gliadin/glutenin family.

In terms of biological role, gliadin is the major seed storage protein in wheat. The sequence is that of Gamma-gliadin from Triticum aestivum (Wheat).